An 81-amino-acid chain; its full sequence is Small ribosomal subunit protein bS18 (81 aa).

It belongs to the bacterial ribosomal protein bS18 family. In terms of assembly, part of the 30S ribosomal subunit. Forms a tight heterodimer with protein bS6.

Its function is as follows. Binds as a heterodimer with protein bS6 to the central domain of the 16S rRNA, where it helps stabilize the platform of the 30S subunit. This chain is Small ribosomal subunit protein bS18, found in Desulfotalea psychrophila (strain LSv54 / DSM 12343).